The following is a 622-amino-acid chain: Chaperone protein HtpG (622 aa).

The tract at residues 1 to 322 (MTEAKNYEFQ…SEDLPLNISR (322 aa)) is a; substrate-binding. Positions 323 to 539 (QSLQDNALVS…DGFMSASMER (217 aa)) are b. The tract at residues 540–622 (VLAASRKEQG…KILDRAVSRA (83 aa)) is c.

The protein belongs to the heat shock protein 90 family. Homodimer.

It localises to the cytoplasm. Functionally, molecular chaperone. Has ATPase activity. In Desulfotalea psychrophila (strain LSv54 / DSM 12343), this protein is Chaperone protein HtpG.